The primary structure comprises 118 residues: NADH-quinone oxidoreductase subunit A (118 aa).

3 helical membrane passes run 6 to 26, 64 to 84, and 87 to 107; these read LPVL…LLMG, AILF…AVVF, and IGMT…VGFI.

Belongs to the complex I subunit 3 family. As to quaternary structure, NDH-1 is composed of 14 different subunits. Subunits NuoA, H, J, K, L, M, N constitute the membrane sector of the complex.

The protein localises to the cell inner membrane. It catalyses the reaction a quinone + NADH + 5 H(+)(in) = a quinol + NAD(+) + 4 H(+)(out). In terms of biological role, NDH-1 shuttles electrons from NADH, via FMN and iron-sulfur (Fe-S) centers, to quinones in the respiratory chain. The immediate electron acceptor for the enzyme in this species is believed to be ubiquinone. Couples the redox reaction to proton translocation (for every two electrons transferred, four hydrogen ions are translocated across the cytoplasmic membrane), and thus conserves the redox energy in a proton gradient. The chain is NADH-quinone oxidoreductase subunit A from Acidithiobacillus ferrooxidans (strain ATCC 53993 / BNL-5-31) (Leptospirillum ferrooxidans (ATCC 53993)).